A 217-amino-acid chain; its full sequence is Variable small protein 22 (217 aa).

An N-terminal signal peptide occupies residues 1 to 18; it reads MRKRISAIIMTLFMVFMS. Cysteine 19 carries N-palmitoyl cysteine lipidation. Cysteine 19 carries S-diacylglycerol cysteine lipidation. The interval 151 to 174 is disordered; it reads LGKNDASDDDTKKAIKKDNSDKTK. Positions 155-174 are enriched in basic and acidic residues; the sequence is DASDDDTKKAIKKDNSDKTK.

Belongs to the variable small protein (Vsp) family.

It localises to the cell outer membrane. Its function is as follows. The Vlp and Vsp proteins are antigenically distinct proteins, only one vlp or vsp gene is transcriptionally active at any one time. Switching between these genes is a mechanism of host immune response evasion. The sequence is that of Variable small protein 22 from Borrelia hermsii.